The sequence spans 83 residues: MTIFNSISSISNPTRTALSSINTYNYNGSSVNDNSTAYFDNDFGGWGGLGDFGNGNGCGGGSSNVNVINLDIDFGRRRHRRCC.

Belongs to the UPF0512 family.

The sequence is that of UPF0512 protein I from Dictyostelium discoideum (Social amoeba).